We begin with the raw amino-acid sequence, 209 residues long: Large ribosomal subunit protein uL3 (209 aa).

The segment at 126–148 (HGQSRGPMAHGSRYHRRPGSMGP) is disordered.

The protein belongs to the universal ribosomal protein uL3 family. Part of the 50S ribosomal subunit. Forms a cluster with proteins L14 and L19.

In terms of biological role, one of the primary rRNA binding proteins, it binds directly near the 3'-end of the 23S rRNA, where it nucleates assembly of the 50S subunit. The chain is Large ribosomal subunit protein uL3 from Listeria monocytogenes serotype 4b (strain CLIP80459).